We begin with the raw amino-acid sequence, 428 residues long: tRNA(Ile2) 2-agmatinylcytidine synthetase TiaS (428 aa).

Belongs to the TiaS family.

The protein resides in the cytoplasm. The enzyme catalyses cytidine(34) in tRNA(Ile2) + agmatine + ATP + H2O = 2-agmatinylcytidine(34) in tRNA(Ile2) + AMP + 2 phosphate + 2 H(+). Its function is as follows. ATP-dependent agmatine transferase that catalyzes the formation of 2-agmatinylcytidine (agm2C) at the wobble position (C34) of tRNA(Ile2), converting the codon specificity from AUG to AUA. The protein is tRNA(Ile2) 2-agmatinylcytidine synthetase TiaS of Methanosarcina mazei (strain ATCC BAA-159 / DSM 3647 / Goe1 / Go1 / JCM 11833 / OCM 88) (Methanosarcina frisia).